The following is a 447-amino-acid chain: Phosphoglucosamine mutase (447 aa).

Residue Ser-101 is the Phosphoserine intermediate of the active site. Residues Ser-101, Asp-242, Asp-244, and Asp-246 each contribute to the Mg(2+) site. Residue Ser-101 is modified to Phosphoserine.

The protein belongs to the phosphohexose mutase family. The cofactor is Mg(2+). In terms of processing, activated by phosphorylation.

It carries out the reaction alpha-D-glucosamine 1-phosphate = D-glucosamine 6-phosphate. Functionally, catalyzes the conversion of glucosamine-6-phosphate to glucosamine-1-phosphate. The polypeptide is Phosphoglucosamine mutase (Bradyrhizobium diazoefficiens (strain JCM 10833 / BCRC 13528 / IAM 13628 / NBRC 14792 / USDA 110)).